We begin with the raw amino-acid sequence, 64 residues long: Large ribosomal subunit protein bL35 (64 aa).

The segment covering 1-24 (MPKMKSHRGACKRFKKTASGKVKR) has biased composition (basic residues). Residues 1–64 (MPKMKSHRGA…EKQIKRMILA (64 aa)) are disordered. Residues 25–35 (ERMYGSHNLEK) show a composition bias toward basic and acidic residues. Residues 36–45 (KNRKRTRRLH) are compositionally biased toward basic residues.

Belongs to the bacterial ribosomal protein bL35 family.

The protein is Large ribosomal subunit protein bL35 of Prosthecochloris aestuarii (strain DSM 271 / SK 413).